A 248-amino-acid chain; its full sequence is Ureidoacrylate amidohydrolase RutB (248 aa).

D41 serves as the catalytic Proton acceptor. K150 is an active-site residue. Catalysis depends on C183, which acts as the Nucleophile.

This sequence belongs to the isochorismatase family. RutB subfamily.

It carries out the reaction (Z)-3-ureidoacrylate + H2O + H(+) = (Z)-3-aminoacrylate + NH4(+) + CO2. The catalysed reaction is (Z)-3-ureidoacrylate + H2O = (Z)-3-aminoacrylate + carbamate + H(+). It catalyses the reaction (Z)-2-methylureidoacrylate + H2O + H(+) = (Z)-2-methylaminoacrylate + NH4(+) + CO2. Hydrolyzes ureidoacrylate to form aminoacrylate and carbamate. The carbamate hydrolyzes spontaneously, thereby releasing one of the nitrogen atoms of the pyrimidine ring as ammonia and one of its carbon atoms as CO2. This is Ureidoacrylate amidohydrolase RutB from Methylorubrum extorquens (strain ATCC 14718 / DSM 1338 / JCM 2805 / NCIMB 9133 / AM1) (Methylobacterium extorquens).